The primary structure comprises 621 residues: Glucose 1,6-bisphosphate synthase (621 aa).

Residues arginine 73 and serine 175 each coordinate alpha-D-glucose 1,6-bisphosphate. The active-site Phosphoserine intermediate is serine 175. Positions 175, 332, 334, and 336 each coordinate Mg(2+). Serine 175 is modified (phosphoserine). Alpha-D-glucose 1,6-bisphosphate is bound by residues aspartate 336, arginine 337, glutamate 433, serine 435, and lysine 447.

The protein belongs to the phosphohexose mutase family. In terms of tissue distribution, expressed at highest levels in the brain and testis, at intermediate levels in thymus, spleen, lung and skeletal muscle, and at lowest levels in kidney, liver and heart.

Its subcellular location is the cytoplasm. It localises to the cytosol. It catalyses the reaction (2R)-3-phospho-glyceroyl phosphate + alpha-D-glucose 1-phosphate = alpha-D-glucose 1,6-bisphosphate + (2R)-3-phosphoglycerate + H(+). The catalysed reaction is alpha-D-glucose 6-phosphate + (2R)-3-phospho-glyceroyl phosphate = alpha-D-glucose 1,6-bisphosphate + (2R)-3-phosphoglycerate + H(+). It carries out the reaction (2R)-3-phospho-glyceroyl phosphate + alpha-D-ribose 1-phosphate = alpha-D-ribose 1,5-bisphosphate + (2R)-3-phosphoglycerate + H(+). The enzyme catalyses 2-deoxy-alpha-D-ribose 1-phosphate + (2R)-3-phospho-glyceroyl phosphate = 2-deoxy-alpha-D-ribose 1,5-bisphosphate + (2R)-3-phosphoglycerate + H(+). It catalyses the reaction (2R)-3-phospho-glyceroyl phosphate + alpha-D-mannose 1-phosphate = alpha-D-mannose 1,6-bisphosphate + (2R)-3-phosphoglycerate + H(+). Functionally, glucose 1,6-bisphosphate synthase using 1,3-bisphosphoglycerate as a phosphate donor and a series of 1-phosphate sugars, including glucose 1-phosphate, mannose 1-phosphate, ribose 1-phosphate and deoxyribose 1-phosphate, as acceptors. In vitro, also exhibits very low phosphopentomutase and phosphoglucomutase activity which are most probably not physiologically relevant. This is Glucose 1,6-bisphosphate synthase from Mus musculus (Mouse).